A 138-amino-acid polypeptide reads, in one-letter code: Large ribosomal subunit protein uL16 (138 aa).

Residues 1-16 are compositionally biased toward basic residues; it reads MLIPKRVKYRRQHRPT. Positions 1-23 are disordered; sequence MLIPKRVKYRRQHRPTRSGISKG.

This sequence belongs to the universal ribosomal protein uL16 family. Part of the 50S ribosomal subunit.

Binds 23S rRNA and is also seen to make contacts with the A and possibly P site tRNAs. The chain is Large ribosomal subunit protein uL16 from Corynebacterium glutamicum (strain R).